Here is a 196-residue protein sequence, read N- to C-terminus: Chromophore lyase CpcS/CpeS 2 (196 aa).

Belongs to the CpcS/CpeS biliprotein lyase family.

In terms of biological role, covalently attaches a chromophore to Cys residue(s) of phycobiliproteins. The sequence is that of Chromophore lyase CpcS/CpeS 2 from Trichodesmium erythraeum (strain IMS101).